The sequence spans 204 residues: Peptide deformylase (204 aa).

Residues Cys131 and His174 each coordinate Fe cation. Glu175 is a catalytic residue. His178 contributes to the Fe cation binding site.

The protein belongs to the polypeptide deformylase family. The cofactor is Fe(2+).

It catalyses the reaction N-terminal N-formyl-L-methionyl-[peptide] + H2O = N-terminal L-methionyl-[peptide] + formate. Its function is as follows. Removes the formyl group from the N-terminal Met of newly synthesized proteins. Requires at least a dipeptide for an efficient rate of reaction. N-terminal L-methionine is a prerequisite for activity but the enzyme has broad specificity at other positions. The protein is Peptide deformylase of Streptococcus pyogenes serotype M49 (strain NZ131).